The chain runs to 353 residues: UPF0283 membrane protein YcjF (353 aa).

A run of 3 helical transmembrane segments spans residues 70 to 90 (MVMGGLALFGASVVGQGVQWT), 100 to 120 (VALGGCAAGALIVGAGVGSVV), and 213 to 233 (ESTLMIAVSPLALVDMAFIAW).

It belongs to the UPF0283 family.

Its subcellular location is the cell inner membrane. The sequence is that of UPF0283 membrane protein YcjF from Salmonella schwarzengrund (strain CVM19633).